A 436-amino-acid chain; its full sequence is Trigger factor (436 aa).

The 86-residue stretch at 161–246 (GMRVTMDFVG…LNKVEEQILP (86 aa)) folds into the PPIase FKBP-type domain.

The protein belongs to the FKBP-type PPIase family. Tig subfamily.

Its subcellular location is the cytoplasm. It catalyses the reaction [protein]-peptidylproline (omega=180) = [protein]-peptidylproline (omega=0). Functionally, involved in protein export. Acts as a chaperone by maintaining the newly synthesized protein in an open conformation. Functions as a peptidyl-prolyl cis-trans isomerase. The protein is Trigger factor of Aeromonas hydrophila subsp. hydrophila (strain ATCC 7966 / DSM 30187 / BCRC 13018 / CCUG 14551 / JCM 1027 / KCTC 2358 / NCIMB 9240 / NCTC 8049).